A 172-amino-acid chain; its full sequence is 6,7-dimethyl-8-ribityllumazine synthase (172 aa).

5-amino-6-(D-ribitylamino)uracil is bound by residues F24, 58 to 60, and 82 to 84; these read ALE and AVI. 87–88 contacts (2S)-2-hydroxy-3-oxobutyl phosphate; the sequence is ET. The Proton donor role is filled by H90. Residue N115 coordinates 5-amino-6-(D-ribitylamino)uracil. R129 is a (2S)-2-hydroxy-3-oxobutyl phosphate binding site. A disordered region spans residues 150–172; it reads ALEQLDGDEDDEGEGEDDEEERA. A compositionally biased stretch (acidic residues) spans 154–172; the sequence is LDGDEDDEGEGEDDEEERA.

It belongs to the DMRL synthase family.

It catalyses the reaction (2S)-2-hydroxy-3-oxobutyl phosphate + 5-amino-6-(D-ribitylamino)uracil = 6,7-dimethyl-8-(1-D-ribityl)lumazine + phosphate + 2 H2O + H(+). Its pathway is cofactor biosynthesis; riboflavin biosynthesis; riboflavin from 2-hydroxy-3-oxobutyl phosphate and 5-amino-6-(D-ribitylamino)uracil: step 1/2. Functionally, catalyzes the formation of 6,7-dimethyl-8-ribityllumazine by condensation of 5-amino-6-(D-ribitylamino)uracil with 3,4-dihydroxy-2-butanone 4-phosphate. This is the penultimate step in the biosynthesis of riboflavin. This chain is 6,7-dimethyl-8-ribityllumazine synthase, found in Paraburkholderia phymatum (strain DSM 17167 / CIP 108236 / LMG 21445 / STM815) (Burkholderia phymatum).